A 142-amino-acid polypeptide reads, in one-letter code: uncharacterized protein (142 aa).

Residues 1–138 form the N-acetyltransferase domain; sequence MLEKLAEAHP…SFMILVKPLA (138 aa).

This is an uncharacterized protein from Bacillus subtilis (strain 168).